A 959-amino-acid polypeptide reads, in one-letter code: Glutamate receptor 3.4 (959 aa).

A signal peptide spans 1 to 35 (MGFLVMIREVSMAKAIRVVLLCVSVLWVVPKECAC). At 36–613 (RSNFSRNSSS…SPWSFLKPFT (578 aa)) the chain is on the extracellular side. Asparagine 38, asparagine 42, asparagine 108, asparagine 365, asparagine 378, asparagine 404, asparagine 443, asparagine 461, and asparagine 576 each carry an N-linked (GlcNAc...) asparagine glycan. The helical transmembrane segment at 614-634 (IEMWAVTGGFFLFVGAMVWIL) threads the bilayer. Over 635–643 (EHRFNQEFR) the chain is Cytoplasmic. Residues 644–664 (GPPRRQLITIFWFSFSTMFFS) form a helical membrane-spanning segment. The Cytoplasmic segment spans residues 665–675 (HRENTVSSLGR). A helical membrane pass occupies residues 676–696 (FVLIIWLFVVLIINSSYTASL). At 697-857 (TSILTIRQLT…SEDSQLSLKS (161 aa)) the chain is on the extracellular side. A helical membrane pass occupies residues 858 to 878 (FWGLFLICGITCFMALTVFFW). Over 879–959 (RVFWQYQRLL…TSQSQHGEIT (81 aa)) the chain is Cytoplasmic. Disordered regions lie at residues 893–913 (DEER…SRAP) and 936–959 (KSSK…GEIT). The span at 943–959 (STQSAAGTSQSQHGEIT) shows a compositional bias: low complexity.

This sequence belongs to the glutamate-gated ion channel (TC 1.A.10.1) family. In terms of assembly, forms a heteromeric channel with GLR3.2. Highly expressed in roots and at lower levels in leaves and siliques. Expressed in seedlings, cotyledons, roots (e.g. root hairs, epidermis and cortex cells), stems, leaves (e.g. vascular bundles and hydathodes), and siliques. Expressed in root phloem.

The protein resides in the cell membrane. Its subcellular location is the plastid. It localises to the chloroplast membrane. In terms of biological role, glutamate-gated receptor that probably acts as a non-selective cation channel, at least in hypocotyls. Can be triggered by Asn, Ser, Gly and, to a lower extent, Ala, Cys and Glu. May be involved in light-signal transduction and calcium homeostasis via the regulation of calcium influx into cells. Plays an important role in the calcium-based fast transmission of environmental stress. Acts as a negative regulator of lateral root initiation and development. May restrict primordia numbers and position along the root axis by a signaling process originating in the phloem. AtGLR3.4-mediated cytosolic calcium influx may be involved in the regulation of seed germination under salt stress by modulating sodium accumulation through the SOS pathway. The polypeptide is Glutamate receptor 3.4 (Arabidopsis thaliana (Mouse-ear cress)).